The primary structure comprises 569 residues: Retrotransposon Gag-like protein 5 (569 aa).

2 disordered regions span residues 115 to 151 (DGPA…LERP) and 323 to 506 (RNII…PSRR). Pro residues predominate over residues 117 to 146 (PADPPLLPIPPPPALPPPASKEPPPQPPLA). Residues 334-350 (NEEESEDEEYYSEDEDQ) show a composition bias toward acidic residues. The span at 353–367 (RRHRLHSKDQRKRMR) shows a compositional bias: basic residues. 2 stretches are compositionally biased toward basic and acidic residues: residues 372–392 (EMKE…KKEE) and 401–415 (MKQK…NKNE). Composition is skewed to acidic residues over residues 416 to 429 (EEGE…EDED) and 443 to 469 (GTEE…ELME). A compositionally biased stretch (polar residues) spans 476–485 (HASSQTSGPT).

The sequence is that of Retrotransposon Gag-like protein 5 from Homo sapiens (Human).